Reading from the N-terminus, the 336-residue chain is Holliday junction branch migration complex subunit RuvB (336 aa).

The large ATPase domain (RuvB-L) stretch occupies residues Met1–Tyr182. ATP is bound by residues Leu21, Arg22, Gly63, Lys66, Thr67, Ser68, Glu129 to Phe131, Arg172, Tyr182, and Arg219. Thr67 contacts Mg(2+). The small ATPAse domain (RuvB-S) stretch occupies residues Ser183–Gly253. The segment at Glu256–Phe336 is head domain (RuvB-H). Residues Arg310 and Arg315 each coordinate DNA.

Belongs to the RuvB family. Homohexamer. Forms an RuvA(8)-RuvB(12)-Holliday junction (HJ) complex. HJ DNA is sandwiched between 2 RuvA tetramers; dsDNA enters through RuvA and exits via RuvB. An RuvB hexamer assembles on each DNA strand where it exits the tetramer. Each RuvB hexamer is contacted by two RuvA subunits (via domain III) on 2 adjacent RuvB subunits; this complex drives branch migration. In the full resolvosome a probable DNA-RuvA(4)-RuvB(12)-RuvC(2) complex forms which resolves the HJ.

It localises to the cytoplasm. It carries out the reaction ATP + H2O = ADP + phosphate + H(+). Its function is as follows. The RuvA-RuvB-RuvC complex processes Holliday junction (HJ) DNA during genetic recombination and DNA repair, while the RuvA-RuvB complex plays an important role in the rescue of blocked DNA replication forks via replication fork reversal (RFR). RuvA specifically binds to HJ cruciform DNA, conferring on it an open structure. The RuvB hexamer acts as an ATP-dependent pump, pulling dsDNA into and through the RuvAB complex. RuvB forms 2 homohexamers on either side of HJ DNA bound by 1 or 2 RuvA tetramers; 4 subunits per hexamer contact DNA at a time. Coordinated motions by a converter formed by DNA-disengaged RuvB subunits stimulates ATP hydrolysis and nucleotide exchange. Immobilization of the converter enables RuvB to convert the ATP-contained energy into a lever motion, pulling 2 nucleotides of DNA out of the RuvA tetramer per ATP hydrolyzed, thus driving DNA branch migration. The RuvB motors rotate together with the DNA substrate, which together with the progressing nucleotide cycle form the mechanistic basis for DNA recombination by continuous HJ branch migration. Branch migration allows RuvC to scan DNA until it finds its consensus sequence, where it cleaves and resolves cruciform DNA. The chain is Holliday junction branch migration complex subunit RuvB from Helicobacter pylori (strain G27).